We begin with the raw amino-acid sequence, 135 residues long: Small ribosomal subunit protein eS24A (135 aa).

N-acetylserine is present on Ser2. Ser14 carries the post-translational modification Phosphoserine. Lys21 participates in a covalent cross-link: Glycyl lysine isopeptide (Lys-Gly) (interchain with G-Cter in ubiquitin). At Ser56 the chain carries Phosphoserine. The disordered stretch occupies residues 102-135; sequence KASRQQRKQKKNRDKKIFGTGKRLAKKVARRNAD. 2 stretches are compositionally biased toward basic residues: residues 105-115 and 124-135; these read RQQRKQKKNRD and RLAKKVARRNAD.

Belongs to the eukaryotic ribosomal protein eS24 family. In terms of assembly, component of the small ribosomal subunit (SSU). Mature yeast ribosomes consist of a small (40S) and a large (60S) subunit. The 40S small subunit contains 1 molecule of ribosomal RNA (18S rRNA) and 33 different proteins (encoded by 57 genes). The large 60S subunit contains 3 rRNA molecules (25S, 5.8S and 5S rRNA) and 46 different proteins (encoded by 81 genes). In terms of processing, N-terminally acetylated by acetyltransferase NatA. Also partially acetylated by NatC.

Its subcellular location is the cytoplasm. Component of the ribosome, a large ribonucleoprotein complex responsible for the synthesis of proteins in the cell. The small ribosomal subunit (SSU) binds messenger RNAs (mRNAs) and translates the encoded message by selecting cognate aminoacyl-transfer RNA (tRNA) molecules. The large subunit (LSU) contains the ribosomal catalytic site termed the peptidyl transferase center (PTC), which catalyzes the formation of peptide bonds, thereby polymerizing the amino acids delivered by tRNAs into a polypeptide chain. The nascent polypeptides leave the ribosome through a tunnel in the LSU and interact with protein factors that function in enzymatic processing, targeting, and the membrane insertion of nascent chains at the exit of the ribosomal tunnel. The chain is Small ribosomal subunit protein eS24A from Saccharomyces cerevisiae (strain ATCC 204508 / S288c) (Baker's yeast).